Here is a 347-residue protein sequence, read N- to C-terminus: S-adenosylmethionine:tRNA ribosyltransferase-isomerase (347 aa).

This sequence belongs to the QueA family. In terms of assembly, monomer.

The protein resides in the cytoplasm. It catalyses the reaction 7-aminomethyl-7-carbaguanosine(34) in tRNA + S-adenosyl-L-methionine = epoxyqueuosine(34) in tRNA + adenine + L-methionine + 2 H(+). The protein operates within tRNA modification; tRNA-queuosine biosynthesis. Transfers and isomerizes the ribose moiety from AdoMet to the 7-aminomethyl group of 7-deazaguanine (preQ1-tRNA) to give epoxyqueuosine (oQ-tRNA). The chain is S-adenosylmethionine:tRNA ribosyltransferase-isomerase from Gluconobacter oxydans (strain 621H) (Gluconobacter suboxydans).